Reading from the N-terminus, the 135-residue chain is Ribonuclease P protein component (135 aa).

It belongs to the RnpA family. In terms of assembly, consists of a catalytic RNA component (M1 or rnpB) and a protein subunit.

It carries out the reaction Endonucleolytic cleavage of RNA, removing 5'-extranucleotides from tRNA precursor.. RNaseP catalyzes the removal of the 5'-leader sequence from pre-tRNA to produce the mature 5'-terminus. It can also cleave other RNA substrates such as 4.5S RNA. The protein component plays an auxiliary but essential role in vivo by binding to the 5'-leader sequence and broadening the substrate specificity of the ribozyme. This is Ribonuclease P protein component from Saccharophagus degradans (strain 2-40 / ATCC 43961 / DSM 17024).